Here is a 396-residue protein sequence, read N- to C-terminus: MAEKEHYVRTKPHVNIGTIGHVDHGKTTLTAAITTVLAEKGLAKAEDYSQIDAAPEEKERGITINTAHVEYETENRHYAHMDAPGHADYIKNMITGAAQMDGAILVVAATDGPMPQTREHILLARQVGVNYIVVFLNKCDLVDDPELIDLVEMEVRDLLTEYDYPGDDIPVVRGSALKALQGDKEAQDQIMKLMDIVDEYIPTPERQTDKPFLMPVEDVFTITGRGTVASGRIDRGTVKVGDEVEIVGLVDKVLKSVVTGLEMFHKTLDLGEAGDNVGVLLRGVDRDQVVRGQVLAAPGSIQTHKKFKAQVYVLKKDEGGRHTPFFSDYRPQFYFHTTDITGEIELPEGTEMVMPGDNTEFTVTLIKPAAIEKGTKFTIREGGRTVGAGQVTEILD.

The tr-type G domain maps to 11–205; it reads KPHVNIGTIG…IVDEYIPTPE (195 aa). Residues 20–27 are G1; it reads GHVDHGKT. 20–27 contacts GTP; that stretch reads GHVDHGKT. Residue T27 coordinates Mg(2+). Residues 61–65 are G2; it reads GITIN. The segment at 82–85 is G3; it reads DAPG. Residues 82-86 and 137-140 each bind GTP; these read DAPGH and NKCD. Residues 137-140 form a G4 region; sequence NKCD. Positions 175–177 are G5; the sequence is SAL.

This sequence belongs to the TRAFAC class translation factor GTPase superfamily. Classic translation factor GTPase family. EF-Tu/EF-1A subfamily. In terms of assembly, monomer.

Its subcellular location is the cytoplasm. It carries out the reaction GTP + H2O = GDP + phosphate + H(+). Functionally, GTP hydrolase that promotes the GTP-dependent binding of aminoacyl-tRNA to the A-site of ribosomes during protein biosynthesis. This chain is Elongation factor Tu, found in Lactobacillus acidophilus (strain ATCC 700396 / NCK56 / N2 / NCFM).